A 462-amino-acid polypeptide reads, in one-letter code: GTPase Der (462 aa).

EngA-type G domains follow at residues 9-171 (KTIA…NLNQ) and 201-372 (IQVG…ECFS). Residues 15 to 22 (GQPNVGKS), 62 to 66 (DTGGM), 123 to 126 (NKID), 207 to 214 (GRVNVGKS), 254 to 258 (DTAGI), and 318 to 321 (NKWD) contribute to the GTP site. The 85-residue stretch at 373-457 (KRIPTSLLNS…PLILNAKDKK (85 aa)) folds into the KH-like domain.

This sequence belongs to the TRAFAC class TrmE-Era-EngA-EngB-Septin-like GTPase superfamily. EngA (Der) GTPase family. As to quaternary structure, associates with the 50S ribosomal subunit.

GTPase that plays an essential role in the late steps of ribosome biogenesis. The chain is GTPase Der from Helicobacter pylori (strain P12).